Reading from the N-terminus, the 330-residue chain is tRNA-modifying protein YgfZ (330 aa).

Folate-binding residues include tryptophan 28 and tryptophan 190.

The protein belongs to the tRNA-modifying YgfZ family.

The protein resides in the cytoplasm. Folate-binding protein involved in regulating the level of ATP-DnaA and in the modification of some tRNAs. It is probably a key factor in regulatory networks that act via tRNA modification, such as initiation of chromosomal replication. This Yersinia enterocolitica serotype O:8 / biotype 1B (strain NCTC 13174 / 8081) protein is tRNA-modifying protein YgfZ.